Reading from the N-terminus, the 672-residue chain is Poly-beta-1,6-N-acetyl-D-glucosamine N-deacetylase (672 aa).

The first 20 residues, 1–20 (MLRNGNKYLLMLVSIIMLTA), serve as a signal peptide directing secretion. Cys-21 carries N-palmitoyl cysteine lipidation. Residue Cys-21 is the site of S-diacylglycerol cysteine attachment. The 243-residue stretch at 107–349 (KAVVLTFDDG…IQRVKDMQIS (243 aa)) folds into the NodB homology domain.

The protein belongs to the polysaccharide deacetylase family.

It is found in the cell outer membrane. Catalyzes the N-deacetylation of poly-beta-1,6-N-acetyl-D-glucosamine (PGA), a biofilm adhesin polysaccharide. N-deacetylation promotes PGA export through the PgaA porin. This is Poly-beta-1,6-N-acetyl-D-glucosamine N-deacetylase (pgaB) from Escherichia coli O157:H7.